The chain runs to 173 residues: MIEKRNIFLVGPMGAGKSTIGRQLAQQLSMEFFDSDKEIERCTGADISWIFDLEGEQGFRYREEILINQLTEKKGIVLATGGGSIKSKETRNVLSARGVVIYLETSIEKQLIRTQRDKKRPLLQSVGQCPQFFQTLAKERNPLYEEIADIIIPTEDHSFKIVAKKIIHLLEKP.

14–19 (GAGKST) is a binding site for ATP. Ser-18 provides a ligand contact to Mg(2+). Residues Asp-36, Arg-60, and Gly-82 each contribute to the substrate site. Arg-120 provides a ligand contact to ATP. Residue Arg-140 coordinates substrate.

The protein belongs to the shikimate kinase family. Monomer. The cofactor is Mg(2+).

The protein resides in the cytoplasm. The catalysed reaction is shikimate + ATP = 3-phosphoshikimate + ADP + H(+). It functions in the pathway metabolic intermediate biosynthesis; chorismate biosynthesis; chorismate from D-erythrose 4-phosphate and phosphoenolpyruvate: step 5/7. Catalyzes the specific phosphorylation of the 3-hydroxyl group of shikimic acid using ATP as a cosubstrate. In Hamiltonella defensa subsp. Acyrthosiphon pisum (strain 5AT), this protein is Shikimate kinase 1.